Consider the following 455-residue polypeptide: Ribulose bisphosphate carboxylase large chain (455 aa).

Residue Lys5 is modified to N6,N6,N6-trimethyllysine. The substrate site is built by Asn114 and Thr164. Lys166 acts as the Proton acceptor in catalysis. Residue Lys168 participates in substrate binding. Lys192, Asp194, and Glu195 together coordinate Mg(2+). At Lys192 the chain carries N6-carboxylysine. His285 (proton acceptor) is an active-site residue. Arg286, His318, and Ser370 together coordinate substrate.

It belongs to the RuBisCO large chain family. Type I subfamily. As to quaternary structure, heterohexadecamer of 8 large chains and 8 small chains; disulfide-linked. The disulfide link is formed within the large subunit homodimers. The cofactor is Mg(2+). In terms of processing, the disulfide bond which can form in the large chain dimeric partners within the hexadecamer appears to be associated with oxidative stress and protein turnover.

The protein resides in the plastid. Its subcellular location is the chloroplast. The catalysed reaction is 2 (2R)-3-phosphoglycerate + 2 H(+) = D-ribulose 1,5-bisphosphate + CO2 + H2O. It catalyses the reaction D-ribulose 1,5-bisphosphate + O2 = 2-phosphoglycolate + (2R)-3-phosphoglycerate + 2 H(+). Its function is as follows. RuBisCO catalyzes two reactions: the carboxylation of D-ribulose 1,5-bisphosphate, the primary event in carbon dioxide fixation, as well as the oxidative fragmentation of the pentose substrate in the photorespiration process. Both reactions occur simultaneously and in competition at the same active site. The protein is Ribulose bisphosphate carboxylase large chain of Lupinus microcarpus (Chick lupine).